A 579-amino-acid polypeptide reads, in one-letter code: Insulin-like growth factor 2 mRNA-binding protein 3 (579 aa).

RRM domains lie at 2 to 75 (NKLY…HSVP) and 81 to 156 (RKLQ…YIPD). Positions 158–192 (TAAQQNPSPQLRGRRGPGQRGSSRQASPGSVSKQK) are disordered. Serine 165 carries the post-translational modification Phosphoserine. A Phosphoserine; by MTOR modification is found at serine 184. 3 KH domains span residues 195-260 (DLPL…CKSI), 276-343 (EIPL…EEEI), and 405-470 (TETV…QGRI). Glycyl lysine isopeptide (Lys-Gly) (interchain with G-Cter in SUMO2) cross-links involve residues lysine 450 and lysine 475. A KH 4 domain is found at 487–553 (KLEAHIRVPS…YACQVAQRKI (67 aa)). At threonine 528 the chain carries Phosphothreonine.

The protein belongs to the RRM IMP/VICKZ family. As to quaternary structure, can form homooligomers and heterooligomers with IGF2BP1 and IGF2BP3 in an RNA-dependent manner. Interacts with IGF2BP1. Interacts with ELAVL1, DHX9, HNRNPU, MATR3 and PABPC1. As to expression, expressed in oocytes, spermatogonia and spermatocytes (at protein level).

The protein resides in the nucleus. It is found in the cytoplasm. Its subcellular location is the P-body. It localises to the stress granule. Its function is as follows. RNA-binding factor that may recruit target transcripts to cytoplasmic protein-RNA complexes (mRNPs). This transcript 'caging' into mRNPs allows mRNA transport and transient storage. It also modulates the rate and location at which target transcripts encounter the translational apparatus and shields them from endonuclease attacks or microRNA-mediated degradation. Preferentially binds to N6-methyladenosine (m6A)-containing mRNAs and increases their stability. Binds to the 3'-UTR of CD44 mRNA and stabilizes it, hence promotes cell adhesion and invadopodia formation. Binds to beta-actin/ACTB and MYC transcripts. Increases MYC mRNA stability by binding to the coding region instability determinant (CRD) and binding is enhanced by m6A-modification of the CRD. Binds to the 5'-UTR of the insulin-like growth factor 2 (IGF2) mRNAs. This is Insulin-like growth factor 2 mRNA-binding protein 3 (Igf2bp3) from Mus musculus (Mouse).